The following is a 562-amino-acid chain: Arginine--tRNA ligase (562 aa).

A 'HIGH' region motif is present at residues 129–139 (ANPTGPLHVGH).

This sequence belongs to the class-I aminoacyl-tRNA synthetase family. In terms of assembly, monomer.

The protein resides in the cytoplasm. The catalysed reaction is tRNA(Arg) + L-arginine + ATP = L-arginyl-tRNA(Arg) + AMP + diphosphate. This chain is Arginine--tRNA ligase, found in Xanthomonas oryzae pv. oryzae (strain MAFF 311018).